The sequence spans 118 residues: Urease subunit beta (118 aa).

This sequence belongs to the urease beta subunit family. Heterotrimer of UreA (gamma), UreB (beta) and UreC (alpha) subunits. Three heterotrimers associate to form the active enzyme.

It is found in the cytoplasm. It carries out the reaction urea + 2 H2O + H(+) = hydrogencarbonate + 2 NH4(+). Its pathway is nitrogen metabolism; urea degradation; CO(2) and NH(3) from urea (urease route): step 1/1. In Aliivibrio fischeri (strain MJ11) (Vibrio fischeri), this protein is Urease subunit beta.